Consider the following 185-residue polypeptide: Elongation factor P (185 aa).

It belongs to the elongation factor P family.

Its subcellular location is the cytoplasm. It participates in protein biosynthesis; polypeptide chain elongation. Its function is as follows. Involved in peptide bond synthesis. Stimulates efficient translation and peptide-bond synthesis on native or reconstituted 70S ribosomes in vitro. Probably functions indirectly by altering the affinity of the ribosome for aminoacyl-tRNA, thus increasing their reactivity as acceptors for peptidyl transferase. This Staphylococcus saprophyticus subsp. saprophyticus (strain ATCC 15305 / DSM 20229 / NCIMB 8711 / NCTC 7292 / S-41) protein is Elongation factor P.